We begin with the raw amino-acid sequence, 426 residues long: Glutamate-1-semialdehyde 2,1-aminomutase (426 aa).

At Lys-265 the chain carries N6-(pyridoxal phosphate)lysine.

The protein belongs to the class-III pyridoxal-phosphate-dependent aminotransferase family. HemL subfamily. As to quaternary structure, homodimer. Pyridoxal 5'-phosphate is required as a cofactor.

The protein resides in the cytoplasm. It catalyses the reaction (S)-4-amino-5-oxopentanoate = 5-aminolevulinate. The protein operates within porphyrin-containing compound metabolism; protoporphyrin-IX biosynthesis; 5-aminolevulinate from L-glutamyl-tRNA(Glu): step 2/2. The chain is Glutamate-1-semialdehyde 2,1-aminomutase from Shigella boydii serotype 4 (strain Sb227).